The following is a 449-amino-acid chain: Bifunctional F420 biosynthesis protein FbiB (449 aa).

The tract at residues 1–245 (MSPAGEHGTA…PGTEDLFWLG (245 aa)) is coenzyme F420:L-glutamate ligase. Residues 21-24 (LPEF), Ser51, and Lys56 contribute to the GTP site. Position 110 (Asp110) interacts with a divalent metal cation. Asn113 serves as a coordination point for GTP. A divalent metal cation contacts are provided by Asp151 and Thr152. Positions 246–449 (TAEAIELGRR…ADPGDLLIRK (204 aa)) are dehydro-coenzyme F420-0 reductase. FMN contacts are provided by residues 261–265 (RRSVR) and Ala289. Asp321 is a binding site for coenzyme F420-(gamma-Glu)n. Gly400 and Arg437 together coordinate FMN.

It in the N-terminal section; belongs to the CofE family. The cofactor is Mg(2+). Requires Mn(2+) as cofactor. K(+) serves as cofactor.

The catalysed reaction is oxidized coenzyme F420-0 + GTP + L-glutamate = oxidized coenzyme F420-1 + GDP + phosphate + H(+). The enzyme catalyses oxidized coenzyme F420-1 + GTP + L-glutamate = oxidized coenzyme F420-2 + GDP + phosphate + H(+). It carries out the reaction oxidized coenzyme F420-(gamma-L-Glu)(n) + GTP + L-glutamate = oxidized coenzyme F420-(gamma-L-Glu)(n+1) + GDP + phosphate + H(+). It catalyses the reaction oxidized coenzyme F420-0 + FMN + H(+) = dehydro coenzyme F420-0 + FMNH2. The protein operates within cofactor biosynthesis; coenzyme F420 biosynthesis. Bifunctional enzyme that catalyzes the GTP-dependent successive addition of multiple gamma-linked L-glutamates to the L-lactyl phosphodiester of 7,8-didemethyl-8-hydroxy-5-deazariboflavin (F420-0) to form polyglutamated F420 derivatives, and the FMNH2-dependent reduction of dehydro-F420-0 to form F420-0. This is Bifunctional F420 biosynthesis protein FbiB from Mycobacterium avium (strain 104).